The chain runs to 402 residues: Triose phosphate/phosphate translocator, chloroplastic (402 aa).

A chloroplast-targeting transit peptide spans Met1–Pro72. Residues Ala73–Pro96 are Chloroplast intermembrane-facing. Residues Ala97–Leu117 form a helical membrane-spanning segment. The Lumenal segment spans residues Asn118–Tyr129. The helical transmembrane segment at Phe130 to Gly150 threads the bilayer. The Chloroplast intermembrane segment spans residues Leu151 to Gln207. Residues Phe208–Gly228 traverse the membrane as a helical segment. Topologically, residues Val229–Asn272 are lumenal. Residues Ile273 to Ile292 traverse the membrane as a helical segment. Residues Glu293 to Gln370 are Chloroplast intermembrane-facing. A helical membrane pass occupies residues Thr371 to Gln391. The Lumenal segment spans residues Ile392–Ala402.

The protein belongs to the TPT transporter family. TPT (TC 2.A.7.9) subfamily. In terms of assembly, homodimer.

It localises to the plastid. Its subcellular location is the chloroplast membrane. Its function is as follows. Mediates the export of fixed carbons from the chloroplasts into the cytosol in the form of triose phosphates. The chain is Triose phosphate/phosphate translocator, chloroplastic from Pisum sativum (Garden pea).